A 383-amino-acid polypeptide reads, in one-letter code: D-alanine--D-alanine ligase (383 aa).

Positions 164–373 (KLAFQAAGLE…YSALIDELIT (210 aa)) constitute an ATP-grasp domain. 196–251 (VAELGFPVFVKPARAGSSFGITRVDEPSQLDAAIATAREHDLKLVVEAGIDGREIE) contributes to the ATP binding site. Asp-327, Glu-340, and Asn-342 together coordinate Mg(2+).

It belongs to the D-alanine--D-alanine ligase family. Mg(2+) is required as a cofactor. Mn(2+) serves as cofactor.

It is found in the cytoplasm. It carries out the reaction 2 D-alanine + ATP = D-alanyl-D-alanine + ADP + phosphate + H(+). The protein operates within cell wall biogenesis; peptidoglycan biosynthesis. Cell wall formation. The chain is D-alanine--D-alanine ligase from Kocuria rhizophila (strain ATCC 9341 / DSM 348 / NBRC 103217 / DC2201).